We begin with the raw amino-acid sequence, 230 residues long: Orotidine 5'-phosphate decarboxylase (230 aa).

Residues Asp8, Lys30, 59–68 (DLKLYDIPNT), Thr118, Arg178, Gln187, Gly207, and Arg208 each bind substrate. Residue Lys61 is the Proton donor of the active site.

It belongs to the OMP decarboxylase family. Type 1 subfamily. In terms of assembly, homodimer.

The catalysed reaction is orotidine 5'-phosphate + H(+) = UMP + CO2. Its pathway is pyrimidine metabolism; UMP biosynthesis via de novo pathway; UMP from orotate: step 2/2. Functionally, catalyzes the decarboxylation of orotidine 5'-monophosphate (OMP) to uridine 5'-monophosphate (UMP). The protein is Orotidine 5'-phosphate decarboxylase of Sulfurovum sp. (strain NBC37-1).